Here is a 172-residue protein sequence, read N- to C-terminus: Lipoprotein signal peptidase (172 aa).

A run of 2 helical transmembrane segments spans residues 70-90 (ERWLLVAGTALIAAGIVAWIW) and 94-114 (AKGDVVALGLVLGGAIGNIAD). Active-site residues include Asp-123 and Asp-142. Residues 134 to 154 (PFLVFNVADAAITIGVLILVL) form a helical membrane-spanning segment.

This sequence belongs to the peptidase A8 family.

The protein localises to the cell inner membrane. It catalyses the reaction Release of signal peptides from bacterial membrane prolipoproteins. Hydrolyzes -Xaa-Yaa-Zaa-|-(S,diacylglyceryl)Cys-, in which Xaa is hydrophobic (preferably Leu), and Yaa (Ala or Ser) and Zaa (Gly or Ala) have small, neutral side chains.. Its pathway is protein modification; lipoprotein biosynthesis (signal peptide cleavage). Its function is as follows. This protein specifically catalyzes the removal of signal peptides from prolipoproteins. The protein is Lipoprotein signal peptidase of Rhizorhabdus wittichii (strain DSM 6014 / CCUG 31198 / JCM 15750 / NBRC 105917 / EY 4224 / RW1) (Sphingomonas wittichii).